A 317-amino-acid polypeptide reads, in one-letter code: Melanocyte-stimulating hormone receptor (317 aa).

The Extracellular segment spans residues 1-37; it reads MPMHGAQRKLLGSLNSTPTATSNLGLAANHTGAPCLE. N-linked (GlcNAc...) asparagine glycosylation occurs at asparagine 29. Residues 38-63 traverse the membrane as a helical segment; sequence VSIPDGLFLSLGLVSLVENVLVVAAI. Residues 64–72 are Cytoplasmic-facing; that stretch reads AKNRNLHSS. A helical membrane pass occupies residues 73–93; that stretch reads MYCFICCLALSDLLVSGSNML. Residues 94 to 118 are Extracellular-facing; sequence ETAVILLLEAGALATRTSAMQQLHN. A helical membrane pass occupies residues 119–140; the sequence is TIDVLTCSSMLCSLCFLGAIAV. Residues 141 to 163 are Cytoplasmic-facing; sequence DRYISIFYALRYHSIMTLPRAQR. The chain crosses the membrane as a helical span at residues 164–183; sequence AIAAIWVASXLSSTLFITYY. Residues 184–191 lie on the Extracellular side of the membrane; that stretch reads DHAAVLLC. Residues 192 to 211 form a helical membrane-spanning segment; that stretch reads LVVFFLAMLVLMAVLYVHML. Residues 212-240 are Cytoplasmic-facing; the sequence is ARACQHAHGIIRLHKRQTPAHQGFGLRGA. A helical transmembrane segment spans residues 241–266; it reads ATLTILLGIFFLCWGPFFLHLTLVVF. Residues 267-279 lie on the Extracellular side of the membrane; that stretch reads CPQHLTCSCIFKN. Residues 280–300 form a helical membrane-spanning segment; that stretch reads FKVFLTLIICNTIIDPLIYAF. Topologically, residues 301 to 317 are cytoplasmic; sequence RSQELRRTLKEVLLCSW. Residue cysteine 315 is the site of S-palmitoyl cysteine attachment.

This sequence belongs to the G-protein coupled receptor 1 family. In terms of assembly, interacts with MGRN1, but does not undergo MGRN1-mediated ubiquitination; this interaction competes with GNAS-binding and thus inhibits agonist-induced cAMP production. Interacts with OPN3; the interaction results in a decrease in MC1R-mediated cAMP signaling and ultimately a decrease in melanin production in melanocytes.

The protein localises to the cell membrane. Functionally, receptor for MSH (alpha, beta and gamma) and ACTH. The activity of this receptor is mediated by G proteins which activate adenylate cyclase. Mediates melanogenesis, the production of eumelanin (black/brown) and phaeomelanin (red/yellow), via regulation of cAMP signaling in melanocytes. The sequence is that of Melanocyte-stimulating hormone receptor (MC1R) from Saguinus midas (Golden-handed tamarin).